The sequence spans 82 residues: ATP synthase subunit c, chloroplastic (82 aa).

Helical transmembrane passes span 7–27 and 57–77; these read AASV…PGIG and LAFM…LLFA.

The protein belongs to the ATPase C chain family. In terms of assembly, F-type ATPases have 2 components, F(1) - the catalytic core - and F(0) - the membrane proton channel. F(1) has five subunits: alpha(3), beta(3), gamma(1), delta(1), epsilon(1). F(0) has four main subunits: a(1), b(1), b'(1) and c(10-14). The alpha and beta chains form an alternating ring which encloses part of the gamma chain. F(1) is attached to F(0) by a central stalk formed by the gamma and epsilon chains, while a peripheral stalk is formed by the delta, b and b' chains.

It localises to the plastid. It is found in the chloroplast thylakoid membrane. In terms of biological role, f(1)F(0) ATP synthase produces ATP from ADP in the presence of a proton or sodium gradient. F-type ATPases consist of two structural domains, F(1) containing the extramembraneous catalytic core and F(0) containing the membrane proton channel, linked together by a central stalk and a peripheral stalk. During catalysis, ATP synthesis in the catalytic domain of F(1) is coupled via a rotary mechanism of the central stalk subunits to proton translocation. Its function is as follows. Key component of the F(0) channel; it plays a direct role in translocation across the membrane. A homomeric c-ring of between 10-14 subunits forms the central stalk rotor element with the F(1) delta and epsilon subunits. The chain is ATP synthase subunit c, chloroplastic from Porphyra purpurea (Red seaweed).